A 354-amino-acid polypeptide reads, in one-letter code: MSLDKIMNEAISPWMKGDGPDSDIVLSSRIRLARNFKKYQFSTMQNEEEAKLIQELFKKEFINKTVEPFGEFELLKMNELTPLQRRVLVEKHLISPNLAGTEYGACLLSESEHISVMLNEEDHIRIQCLFSGLQLSEALQSANQIDNWIEKEVEYAFDESLGYITSCPTNVGTGLRASVMIHLPGLVLTKRISRIIQVIQKLGLVVRGIYGEGSEALGNIFQVSNQMTLGKSEEDIIADLKSVIQQIIQQEKMARELIVQNSSIELEDKVYRSYGILANSRLIQSAEAANCLSDLRLGIDLGYIKGISRNILTELMVLTQPGILQQYAGGPLGPEERDYRRATLIRERLRIEKN.

Residues 24–254 enclose the Phosphagen kinase C-terminal domain; sequence IVLSSRIRLA…QQIIQQEKMA (231 aa). ATP contacts are provided by residues 27–31, histidine 92, arginine 125, 176–180, and 207–212; these read SSRIR, RASVM, and RGIYGE. The short motif at 337–342 is the RDXXRA motif of the pArg binding pocket involved in allosteric regulation element; sequence RDYRRA.

The protein belongs to the ATP:guanido phosphotransferase family.

It catalyses the reaction L-arginyl-[protein] + ATP = N(omega)-phospho-L-arginyl-[protein] + ADP + H(+). Its activity is regulated as follows. Appears to be allosterically activated by the binding of pArg-containing polypeptides to the pArg-binding pocket localized in the C-terminal domain of McsB. Functionally, catalyzes the specific phosphorylation of arginine residues in a large number of proteins. Is part of the bacterial stress response system. Protein arginine phosphorylation has a physiologically important role and is involved in the regulation of many critical cellular processes, such as protein homeostasis, motility, competence, and stringent and stress responses, by regulating gene expression and protein activity. The protein is Protein-arginine kinase of Bacillus cereus (strain ATCC 10987 / NRS 248).